We begin with the raw amino-acid sequence, 1088 residues long: RNA-directed RNA polymerase (1088 aa).

A RdRp catalytic domain is found at 501-687 (LSYGDVTRFL…AKRYIAGGKI (187 aa)).

This sequence belongs to the reoviridae RNA-directed RNA polymerase family. In terms of assembly, interacts with VP3 (Potential). Interacts with VP2; this interaction activates VP1. Interacts with NSP5; this interaction is probably necessary for the formation of functional virus factories. Interacts with NSP2; this interaction is weak. It depends on Mg(2+) as a cofactor.

It localises to the virion. It carries out the reaction RNA(n) + a ribonucleoside 5'-triphosphate = RNA(n+1) + diphosphate. Its function is as follows. RNA-directed RNA polymerase that is involved in both transcription and genome replication. Together with VP3 capping enzyme, forms an enzyme complex positioned near the channels situated at each of the five-fold vertices of the core. Following infection, the outermost layer of the virus is lost, leaving a double-layered particle (DLP) made up of the core and VP6 shell. VP1 then catalyzes the transcription of fully conservative plus-strand genomic RNAs that are extruded through the DLP's channels into the cytoplasm where they function as mRNAs for translation of viral proteins. One copy of each of the viral (+)RNAs is also recruited during core assembly, together with newly synthesized polymerase complexes and VP2. The polymerase of these novo-formed particles catalyzes the synthesis of complementary minus-strands leading to dsRNA formation. To do so, the polymerase specifically recognizes and binds 4 bases 5'-UGUG-3' in the conserved 3'-sequence of plus-strand RNA templates. VP2 presumably activates the autoinhibited VP1-RNA complex to coordinate packaging and genome replication. Once dsRNA synthesis is complete, the polymerase switches to the transcriptional mode, thus providing secondary transcription. The sequence is that of RNA-directed RNA polymerase from Homo sapiens (Human).